The chain runs to 453 residues: Bifunctional protein GlmU (453 aa).

A pyrophosphorylase region spans residues 1 to 226; the sequence is MKFSAVILAA…AIEVEGVNDR (226 aa). Residues 8–11, Lys22, Gln73, 78–79, 100–102, Gly137, Glu151, Asn166, and Asn224 each bind UDP-N-acetyl-alpha-D-glucosamine; these read LAAG, GT, and YGD. Position 102 (Asp102) interacts with Mg(2+). Asn224 lines the Mg(2+) pocket. The linker stretch occupies residues 227 to 247; that stretch reads AQLARLERAFQSMQAQKLLEQ. Residues 248–453 are N-acetyltransferase; sequence GVMLRDPARF…TGWQRPVKQK (206 aa). Residues Arg330 and Lys348 each contribute to the UDP-N-acetyl-alpha-D-glucosamine site. Catalysis depends on His360, which acts as the Proton acceptor. UDP-N-acetyl-alpha-D-glucosamine contacts are provided by Tyr363 and Asn374. Residues Ala377, 383-384, Ser402, Ala420, and Arg437 each bind acetyl-CoA; that span reads NY.

The protein in the N-terminal section; belongs to the N-acetylglucosamine-1-phosphate uridyltransferase family. This sequence in the C-terminal section; belongs to the transferase hexapeptide repeat family. As to quaternary structure, homotrimer. Mg(2+) is required as a cofactor.

The protein localises to the cytoplasm. The enzyme catalyses alpha-D-glucosamine 1-phosphate + acetyl-CoA = N-acetyl-alpha-D-glucosamine 1-phosphate + CoA + H(+). It catalyses the reaction N-acetyl-alpha-D-glucosamine 1-phosphate + UTP + H(+) = UDP-N-acetyl-alpha-D-glucosamine + diphosphate. It participates in nucleotide-sugar biosynthesis; UDP-N-acetyl-alpha-D-glucosamine biosynthesis; N-acetyl-alpha-D-glucosamine 1-phosphate from alpha-D-glucosamine 6-phosphate (route II): step 2/2. It functions in the pathway nucleotide-sugar biosynthesis; UDP-N-acetyl-alpha-D-glucosamine biosynthesis; UDP-N-acetyl-alpha-D-glucosamine from N-acetyl-alpha-D-glucosamine 1-phosphate: step 1/1. Its pathway is bacterial outer membrane biogenesis; LPS lipid A biosynthesis. In terms of biological role, catalyzes the last two sequential reactions in the de novo biosynthetic pathway for UDP-N-acetylglucosamine (UDP-GlcNAc). The C-terminal domain catalyzes the transfer of acetyl group from acetyl coenzyme A to glucosamine-1-phosphate (GlcN-1-P) to produce N-acetylglucosamine-1-phosphate (GlcNAc-1-P), which is converted into UDP-GlcNAc by the transfer of uridine 5-monophosphate (from uridine 5-triphosphate), a reaction catalyzed by the N-terminal domain. This chain is Bifunctional protein GlmU, found in Vibrio campbellii (strain ATCC BAA-1116).